The sequence spans 594 residues: UvrABC system protein C (594 aa).

A GIY-YIG domain is found at 17-94 (LEPGCYLMKD…IKQYQPRYNI (78 aa)). Residues 199-234 (KTILHHLEDRMNKASEQLDFEQAKEYRDMIQHIHNL) form the UVR domain.

It belongs to the UvrC family. As to quaternary structure, interacts with UvrB in an incision complex.

Its subcellular location is the cytoplasm. In terms of biological role, the UvrABC repair system catalyzes the recognition and processing of DNA lesions. UvrC both incises the 5' and 3' sides of the lesion. The N-terminal half is responsible for the 3' incision and the C-terminal half is responsible for the 5' incision. In Staphylococcus epidermidis (strain ATCC 12228 / FDA PCI 1200), this protein is UvrABC system protein C.